Here is a 488-residue protein sequence, read N- to C-terminus: Ankyrin repeat domain-containing protein 13C (488 aa).

Positions 1-60 are disordered; sequence MTGEKIRSVRKERKSGLDLLEPDEEPAATGPAKHRGSKIFSGGNHRISRSSSSPGDPDGA. Residues 41–59 are compositionally biased toward low complexity; that stretch reads SGGNHRISRSSSSPGDPDG. ANK repeat units lie at residues 58–87, 90–119, and 123–152; these read DGAY…IAQK, HGNT…PVKV, and QGWS…QQSR.

The protein localises to the endoplasmic reticulum membrane. Acts as a molecular chaperone for G protein-coupled receptors, regulating their biogenesis and exit from the ER. The polypeptide is Ankyrin repeat domain-containing protein 13C (ankrd13c) (Danio rerio (Zebrafish)).